We begin with the raw amino-acid sequence, 598 residues long: ATP-dependent lipid A-core flippase (598 aa).

Residues 1–15 (MSQAYQPDSTKTSAK) show a composition bias toward polar residues. The tract at residues 1-21 (MSQAYQPDSTKTSAKTPVAPT) is disordered. The next 4 helical transmembrane spans lie at 44–64 (WWAILLTIIGFAINAATEIWI), 85–105 (LFPFIIVMLFFVRGVGSFLGN), 172–192 (VVALMGFLLYSNWRLTLILFV), and 269–289 (INTPAVQLLMAMAMAVVVWLA). An ABC transmembrane type-1 domain is found at 48 to 329 (LLTIIGFAIN…LTDVNQQLQR (282 aa)). Positions 360 to 595 (IKLDNVSLVY…HGHYAQMYAR (236 aa)) constitute an ABC transporter domain. Residue 393 to 400 (GRSGAGKS) participates in ATP binding.

This sequence belongs to the ABC transporter superfamily. Lipid exporter (TC 3.A.1.106) family. In terms of assembly, homodimer.

The protein resides in the cell inner membrane. The enzyme catalyses ATP + H2O + lipid A-core oligosaccharideSide 1 = ADP + phosphate + lipid A-core oligosaccharideSide 2.. Functionally, involved in lipopolysaccharide (LPS) biosynthesis. Translocates lipid A-core from the inner to the outer leaflet of the inner membrane. Transmembrane domains (TMD) form a pore in the inner membrane and the ATP-binding domain (NBD) is responsible for energy generation. This Psychrobacter cryohalolentis (strain ATCC BAA-1226 / DSM 17306 / VKM B-2378 / K5) protein is ATP-dependent lipid A-core flippase.